Reading from the N-terminus, the 479-residue chain is Ribosomal RNA small subunit methyltransferase F (479 aa).

S-adenosyl-L-methionine-binding positions include 125 to 131, Glu149, Asp176, and Asp194; that span reads AAAPGSK. Catalysis depends on Cys247, which acts as the Nucleophile.

This sequence belongs to the class I-like SAM-binding methyltransferase superfamily. RsmB/NOP family.

The protein localises to the cytoplasm. It catalyses the reaction cytidine(1407) in 16S rRNA + S-adenosyl-L-methionine = 5-methylcytidine(1407) in 16S rRNA + S-adenosyl-L-homocysteine + H(+). In terms of biological role, specifically methylates the cytosine at position 1407 (m5C1407) of 16S rRNA. The chain is Ribosomal RNA small subunit methyltransferase F from Salmonella arizonae (strain ATCC BAA-731 / CDC346-86 / RSK2980).